The following is a 222-amino-acid chain: Glutathione transferase GST 23 (222 aa).

The region spanning 4 to 83 is the GST N-terminal domain; sequence KGVKVLGMWA…YIDEVWKGGY (80 aa). Residues serine 14, lysine 41, valine 55, and 67–68 contribute to the glutathione site; that span reads ES. A GST C-terminal domain is found at 89–220; that stretch reads DPYERAQARF…ANKARREQLL (132 aa).

Belongs to the GST superfamily.

The enzyme catalyses RX + glutathione = an S-substituted glutathione + a halide anion + H(+). Functionally, involved in multiple disease resistance (MDR). This chain is Glutathione transferase GST 23, found in Zea mays (Maize).